Here is a 219-residue protein sequence, read N- to C-terminus: MALPLSGTRHLTRALLSNVTLMAPPRIPSSVHYGGSRLGCSTRFFSIRCGANRSGSTYSPLNSGSNFSDRPPTEMAPLFPGCDYEHWLIVMDKPGGEGATKQQMIDCYIQTLAKVVGSEEEAKKRIYNVSCERYLGFGCEIDEETSTKLEGLPGVLFVLPDSYVDPENKDYGAELFVNGEIVQRSPERQRRVEPQPQRAQDRPRYNDRTRYSRRRENTR.

The transit peptide at 1–48 directs the protein to the chloroplast; that stretch reads MALPLSGTRHLTRALLSNVTLMAPPRIPSSVHYGGSRLGCSTRFFSIR. The segment at 182-219 is disordered; the sequence is VQRSPERQRRVEPQPQRAQDRPRYNDRTRYSRRRENTR. Residues 185-219 are compositionally biased toward basic and acidic residues; it reads SPERQRRVEPQPQRAQDRPRYNDRTRYSRRRENTR.

It belongs to the MORF family. In terms of assembly, homodimer and heterodimer with MORF9. Interacts with protoporphyrinogen oxidase 1 PPOX1. Heterodimers with MORF8/RIP1 and MORF9/RIP9. Interacts with PCMP-A2/PMD1. Interacts with ORRM1. Interacts with ORRM6.

The protein resides in the plastid. The protein localises to the chloroplast. Its function is as follows. Involved in plastid rRNA processing and consequently in translation and early chloroplast differentiation. Involved in organellar RNA editing. Required for the processing of multiple editing sites in plastids. The polypeptide is Multiple organellar RNA editing factor 2, chloroplastic (Arabidopsis thaliana (Mouse-ear cress)).